The sequence spans 94 residues: Cell division protein CrgA (94 aa).

2 helical membrane passes run 31–51 and 71–91; these read VWFV…LLVF and LGPW…LLTM.

Belongs to the CrgA family.

The protein resides in the cell membrane. Its function is as follows. Involved in cell division. This chain is Cell division protein CrgA, found in Mycobacterium sp. (strain JLS).